A 228-amino-acid chain; its full sequence is Probable septum site-determining protein MinC (228 aa).

This sequence belongs to the MinC family. Interacts with MinD and FtsZ.

Cell division inhibitor that blocks the formation of polar Z ring septums. Rapidly oscillates between the poles of the cell to destabilize FtsZ filaments that have formed before they mature into polar Z rings. Prevents FtsZ polymerization. In Oceanobacillus iheyensis (strain DSM 14371 / CIP 107618 / JCM 11309 / KCTC 3954 / HTE831), this protein is Probable septum site-determining protein MinC.